Consider the following 627-residue polypeptide: RNA interference defective protein 10 (627 aa).

Disordered stretches follow at residues 1–31 (MSNHRSNFRDYQREGIRANNAGTSGDAVRQN), 467–487 (QRDTDEQYDVHQEGPSNHDQY), and 523–589 (SSVR…SEDY). Basic and acidic residues-rich tracts occupy residues 7 to 16 (NFRDYQREGI), 467 to 478 (QRDTDEQYDVHQ), and 526 to 537 (REPEHPSARSRD).

It belongs to the maelstrom family. In terms of assembly, interacts with rde-11 (via RING-type zinc finger domain). Interacts with ergo-1.

In terms of biological role, in complex with rde-11, required in the endogenous and exogenous siRNA pathway for biogenesis and accumulation of secondary small interfering RNA (siRNA) intermediates, such as 22G-siRNAs derived from ergo-1 targets. This chain is RNA interference defective protein 10, found in Caenorhabditis elegans.